The chain runs to 615 residues: 9-cis-epoxycarotenoid dioxygenase NCED1, chloroplastic (615 aa).

A chloroplast-targeting transit peptide spans 1-41 (MPSPASNTWINTTLPSSCSSPFKDLASTSSSPTTLLPFKKR). Disordered regions lie at residues 20-45 (SPFK…SSSN) and 62-101 (YQPT…KQPF). Low complexity-rich tracts occupy residues 27-37 (STSSSPTTLLP) and 64-86 (PTST…TTTT). Positions 316, 365, and 430 each coordinate Fe cation. A coiled-coil region spans residues 571–592 (KEWKSELQIVNAQNLKLEASIK). His602 lines the Fe cation pocket.

It belongs to the carotenoid oxygenase family. Fe(2+) is required as a cofactor.

It is found in the plastid. It localises to the chloroplast thylakoid membrane. It carries out the reaction a 9-cis-epoxycarotenoid + O2 = a 12'-apo-carotenal + 2-cis,4-trans-xanthoxin. The catalysed reaction is 9-cis-violaxanthin + O2 = (3S,5R,6S)-5,6-epoxy-3-hydroxy-5,6-dihydro-12'-apo-beta-caroten-12'-al + 2-cis,4-trans-xanthoxin. The enzyme catalyses 9'-cis-neoxanthin + O2 = (3S,5R,6R)-3,5-dihydroxy-6,7-didehydro-5,6-dihydro-12'-apo-beta-caroten-12'-al + 2-cis,4-trans-xanthoxin. Has a 11,12(11',12') 9-cis epoxycarotenoid cleavage activity. Catalyzes the first step of abscisic-acid biosynthesis from carotenoids, in response to water stress. Active on 9-cis-violaxanthin and 9'-cis-neoxanthin, but not on the all-trans isomers of violaxanthin and neoxanthin. The chain is 9-cis-epoxycarotenoid dioxygenase NCED1, chloroplastic (NCED1) from Phaseolus vulgaris (Kidney bean).